Here is a 353-residue protein sequence, read N- to C-terminus: Photosystem II protein D1 (353 aa).

Residue T2 is modified to N-acetylthreonine. T2 carries the post-translational modification Phosphothreonine. The next 3 helical transmembrane spans lie at 29–46 (YIGWFGVLMIPTLLTATS), 118–133 (HFLLGVACYMGREWEL), and 142–156 (WIAVAYSAPVAAATA). A chlorophyll a-binding site is contributed by H118. Y126 serves as a coordination point for pheophytin a. Residues D170 and E189 each coordinate [CaMn4O5] cluster. A helical membrane pass occupies residues 197 to 218 (FHMLGVAGVFGGSLFSAMHGSL). Position 198 (H198) interacts with chlorophyll a. A quinone contacts are provided by residues H215 and 264-265 (SF). H215 is a binding site for Fe cation. Residue H272 coordinates Fe cation. Residues 274–288 (FLAAWPVVGIWFTAL) traverse the membrane as a helical segment. H332, E333, D342, and A344 together coordinate [CaMn4O5] cluster. The propeptide occupies 345 to 353 (AVEVPSTNG).

It belongs to the reaction center PufL/M/PsbA/D family. As to quaternary structure, PSII is composed of 1 copy each of membrane proteins PsbA, PsbB, PsbC, PsbD, PsbE, PsbF, PsbH, PsbI, PsbJ, PsbK, PsbL, PsbM, PsbT, PsbX, PsbY, PsbZ, Psb30/Ycf12, at least 3 peripheral proteins of the oxygen-evolving complex and a large number of cofactors. It forms dimeric complexes. The D1/D2 heterodimer binds P680, chlorophylls that are the primary electron donor of PSII, and subsequent electron acceptors. It shares a non-heme iron and each subunit binds pheophytin, quinone, additional chlorophylls, carotenoids and lipids. D1 provides most of the ligands for the Mn4-Ca-O5 cluster of the oxygen-evolving complex (OEC). There is also a Cl(-1) ion associated with D1 and D2, which is required for oxygen evolution. The PSII complex binds additional chlorophylls, carotenoids and specific lipids. is required as a cofactor. Post-translationally, tyr-161 forms a radical intermediate that is referred to as redox-active TyrZ, YZ or Y-Z. C-terminally processed by CTPA; processing is essential to allow assembly of the oxygen-evolving complex and thus photosynthetic growth.

The protein resides in the plastid. Its subcellular location is the chloroplast thylakoid membrane. The enzyme catalyses 2 a plastoquinone + 4 hnu + 2 H2O = 2 a plastoquinol + O2. Functionally, photosystem II (PSII) is a light-driven water:plastoquinone oxidoreductase that uses light energy to abstract electrons from H(2)O, generating O(2) and a proton gradient subsequently used for ATP formation. It consists of a core antenna complex that captures photons, and an electron transfer chain that converts photonic excitation into a charge separation. The D1/D2 (PsbA/PsbD) reaction center heterodimer binds P680, the primary electron donor of PSII as well as several subsequent electron acceptors. The polypeptide is Photosystem II protein D1 (Calycanthus floridus var. glaucus (Eastern sweetshrub)).